A 211-amino-acid chain; its full sequence is Thymidylate kinase (211 aa).

7–14 is an ATP binding site; it reads GMDGSGKT.

The protein belongs to the thymidylate kinase family.

It carries out the reaction dTMP + ATP = dTDP + ADP. Functionally, phosphorylation of dTMP to form dTDP in both de novo and salvage pathways of dTTP synthesis. In Mesoplasma florum (strain ATCC 33453 / NBRC 100688 / NCTC 11704 / L1) (Acholeplasma florum), this protein is Thymidylate kinase.